Reading from the N-terminus, the 142-residue chain is MSYSNILVAVAVTPESQQLLAKAVSIARPVKGHISLITLASDPEMYNQLAAPMLEDLRSVMHEETQSFLDKLIQDAGYPVDKTFIAYGELSEHILEVCHKHHFDLVICGNHNHSFFSRASCSAKRVIASSEVDVLLVPLTGD.

It belongs to the universal stress protein A family.

Its subcellular location is the cytoplasm. Functionally, required for resistance to DNA-damaging agents. The protein is Universal stress protein C (uspC) of Escherichia coli (strain K12).